Consider the following 452-residue polypeptide: Adenylyltransferase and sulfurtransferase MOCS3 (452 aa).

ATP is bound by residues Gly-99, Asp-120, 127–131 (SNLHR), Lys-144, and 188–189 (DN). Zn(2+)-binding residues include Cys-230 and Cys-233. Catalysis depends on Cys-247, which acts as the Glycyl thioester intermediate; for adenylyltransferase activity. The Zn(2+) site is built by Cys-305 and Cys-308. Residues 354-450 (KTKAHLLLDV…WTNQVDQSFP (97 aa)) form the Rhodanese domain. The active-site Cysteine persulfide intermediate; for sulfurtransferase activity is the Cys-409.

This sequence in the N-terminal section; belongs to the HesA/MoeB/ThiF family. UBA4 subfamily. Zn(2+) serves as cofactor.

It is found in the cytoplasm. Its subcellular location is the cytosol. The catalysed reaction is [molybdopterin-synthase sulfur-carrier protein]-C-terminal Gly-Gly + ATP + H(+) = [molybdopterin-synthase sulfur-carrier protein]-C-terminal Gly-Gly-AMP + diphosphate. It catalyses the reaction [molybdopterin-synthase sulfur-carrier protein]-C-terminal Gly-Gly-AMP + S-sulfanyl-L-cysteinyl-[cysteine desulfurase] + AH2 = [molybdopterin-synthase sulfur-carrier protein]-C-terminal-Gly-aminoethanethioate + L-cysteinyl-[cysteine desulfurase] + A + AMP + 2 H(+). It functions in the pathway tRNA modification; 5-methoxycarbonylmethyl-2-thiouridine-tRNA biosynthesis. It participates in cofactor biosynthesis; molybdopterin biosynthesis. Functionally, plays a central role in 2-thiolation of mcm(5)S(2)U at tRNA wobble positions of cytosolic tRNA(Lys), tRNA(Glu) and tRNA(Gln). Also essential during biosynthesis of the molybdenum cofactor. Acts by mediating the C-terminal thiocarboxylation of sulfur carriers URM1 and MOCS2A. Its N-terminus first activates URM1 and MOCS2A as acyl-adenylates (-COAMP), then the persulfide sulfur on the catalytic cysteine is transferred to URM1 and MOCS2A to form thiocarboxylation (-COSH) of their C-terminus. The reaction probably involves hydrogen sulfide that is generated from the persulfide intermediate and that acts as a nucleophile towards URM1 and MOCS2A. Subsequently, a transient disulfide bond is formed. Does not use thiosulfate as sulfur donor; NFS1 probably acting as a sulfur donor for thiocarboxylation reactions. This chain is Adenylyltransferase and sulfurtransferase MOCS3, found in Drosophila virilis (Fruit fly).